The primary structure comprises 304 residues: Homoserine kinase (304 aa).

90–100 serves as a coordination point for ATP; it reads PLARGLGSSAS.

This sequence belongs to the GHMP kinase family. Homoserine kinase subfamily.

The protein resides in the cytoplasm. The enzyme catalyses L-homoserine + ATP = O-phospho-L-homoserine + ADP + H(+). The protein operates within amino-acid biosynthesis; L-threonine biosynthesis; L-threonine from L-aspartate: step 4/5. Its function is as follows. Catalyzes the ATP-dependent phosphorylation of L-homoserine to L-homoserine phosphate. This Staphylococcus aureus (strain JH9) protein is Homoserine kinase.